We begin with the raw amino-acid sequence, 794 residues long: MNIDDKLEGLFLKCGGIDEMQSSRAMVVMGGVSGQSAVSGELQESVLQDRSLPHQEILAADEVLQESEMRQQDMISHDELMVHEETVKNDEEQTDTHERLPQGLQYALNVPISVKQEITFTDVSEQLMRDKKQVREPVDLQKKKKRKQRSPAKILTINEDGSLGLKTPKSHVCEHCNAAFRTNYHLQRHVFIHTGEKPFQCSQCDMRFIQKYLLQRHEKIHTGEKPFRCDECGMRFIQKYHMERHKRTHSGEKPYQCEYCLQYFSRTDRVLKHKRMCHENHDKKLNRCAIKGGLLTSEEDSGFSTSPKDNSLPKKKRQKPEKKSSGMDKESVLDKSDTKKDRNDYLPLYSSSTKVKDEYMVAEYAVEMPHSSVGGSHLEDASGEIHPPKLVLKKINSKRSLKQPLEQSQTISPLSTYEDSKVSKYAFELVDKQALLDSEGSADIDQVDNLQEGPSKPVHSSTNYDDAMQFLKKKRYLQAASNNSREYALNVGTIASQPSVTQAAVASVIDENTTASILDSQALNVEIKSNHDKNVIPDEVLQTLLDHYSHKANGQHEISFSVADTEVTSSISINSSDVPEVTQSENVGSSSQASSSDKANMLQEYSKFLQQALDRTSQNDAYLNSPSLNFVTDNQTLPNPPAFSSIDKQVYAAMPINSFRSGMNSPLRTTPDKSHFGLIVGDSQHPFPFSGDETNHASATSTADFLDQVTSQKKAEAQPVHQAYQMSSFEQPFRAPYHGSRAGIATQFSTANGQVNLRGPGTSAEFSEFPLVNVNDNRAGMTSSPDATTGQTFG.

Residue lysine 6 forms a Glycyl lysine isopeptide (Lys-Gly) (interchain with G-Cter in SUMO2) linkage. Serine 51 is modified (phosphoserine). Glycyl lysine isopeptide (Lys-Gly) (interchain with G-Cter in SUMO2) cross-links involve residues lysine 88, lysine 115, and lysine 132. The segment at histidine 171–histidine 193 adopts a C2H2-type 1 zinc-finger fold. Threonine 194 carries the phosphothreonine modification. 2 C2H2-type zinc fingers span residues phenylalanine 199–histidine 221 and phenylalanine 227–histidine 249. Serine 250 bears the Phosphoserine mark. The C2H2-type 4 zinc finger occupies tyrosine 255–histidine 278. A Glycyl lysine isopeptide (Lys-Gly) (interchain with G-Cter in SUMO2) cross-link involves residue lysine 291. Positions glutamate 298–leucine 346 are disordered. A phosphoserine mark is found at serine 301 and serine 306. Residue lysine 308 forms a Glycyl lysine isopeptide (Lys-Gly) (interchain with G-Cter in SUMO2) linkage. Over residues glutamate 321–aspartate 344 the composition is skewed to basic and acidic residues. Residue lysine 356 forms a Glycyl lysine isopeptide (Lys-Gly) (interchain with G-Cter in SUMO1); alternate linkage. Lysine 356 is covalently cross-linked (Glycyl lysine isopeptide (Lys-Gly) (interchain with G-Cter in SUMO2); alternate). Residue lysine 402 forms a Glycyl lysine isopeptide (Lys-Gly) (interchain with G-Cter in SUMO2) linkage. Position 412 is a phosphoserine (serine 412). Glycyl lysine isopeptide (Lys-Gly) (interchain with G-Cter in SUMO2) cross-links involve residues lysine 421 and lysine 424. Polar residues predominate over residues asparagine 574 to glycine 588. Residues asparagine 574–serine 596 are disordered. The residue at position 607 (lysine 607) is an N6-acetyllysine. A phosphoserine mark is found at serine 665 and serine 784.

Belongs to the krueppel C2H2-type zinc-finger protein family. In terms of assembly, interacts with HNRNPDL. Interacts with the 5FMC complex; the interaction requires association with CHTOP. Interacts with CAVIN1. Sumoylated with SUMO2. Desumoylated by SENP3, resulting in the stimulation of transcription of its target genes. As to expression, expressed in heart, lung, kidney, skeletal muscle, liver, brain and spleen.

It localises to the nucleus. In terms of biological role, involved in transcriptional regulation. Represses the transcription of a number of genes including gastrin, stromelysin and enolase. Binds to the G-rich box in the enhancer region of these genes. This is Zinc finger protein 148 (Znf148) from Rattus norvegicus (Rat).